We begin with the raw amino-acid sequence, 609 residues long: CTTNBP2 N-terminal-like protein (609 aa).

Positions 1-10 (MEQNSNSSVA) are enriched in polar residues. A disordered region spans residues 1 to 29 (MEQNSNSSVADTFAEAPATDADYGTENCS). 2 coiled-coil regions span residues 182 to 264 (RMVN…QKQI) and 303 to 370 (IAEG…QQLG). The tract at residues 556–584 (PPAGARGAPPPIPTKPIVPPKREPSLSRL) is disordered. The span at 563 to 574 (APPPIPTKPIVP) shows a compositional bias: pro residues. S586 carries the post-translational modification Phosphoserine.

Its subcellular location is the cell projection. The protein resides in the lamellipodium. It localises to the cytoplasm. The protein localises to the cytoskeleton. It is found in the stress fiber. Its function is as follows. Regulates lamellipodial actin dynamics in a Cortactin-dependent manner and is therefore likely involved in controlling actin branch density, actin-retrograde flow rates and lamellipodial protrusion. Functions by slowing the dissociation of Cortactin from Arp2/3 nucleated branches thereby increasing branch nucleation and junction stability. Associates with core striatin-interacting phosphatase and kinase (STRIPAK) complex to form CTTNBP2NL-STRIPAK complexes. STRIPAK complexes have critical roles in protein (de)phosphorylation and are regulators of multiple signaling pathways including Hippo, MAPK, nuclear receptor and cytoskeleton remodeling. Different types of STRIPAK complexes are involved in a variety of biological processes such as cell growth, differentiation, apoptosis, metabolism and immune regulation. This chain is CTTNBP2 N-terminal-like protein, found in Drosophila melanogaster (Fruit fly).